Consider the following 285-residue polypeptide: Sulfotransferase 2A1 (285 aa).

K44, S45, G46, T47, N48, and W49 together coordinate 3'-phosphoadenylyl sulfate. H99 (proton acceptor) is an active-site residue. 3'-phosphoadenylyl sulfate-binding residues include R121, S129, Y184, S218, M223, R247, K248, and G249.

It belongs to the sulfotransferase 1 family. In terms of assembly, homodimer. Highly expressed in liver.

It is found in the cytoplasm. The enzyme catalyses an alcohol + 3'-phosphoadenylyl sulfate = an alkyl sulfate + adenosine 3',5'-bisphosphate + H(+). It carries out the reaction taurolithocholate + 3'-phosphoadenylyl sulfate = taurolithocholate 3-sulfate + adenosine 3',5'-bisphosphate + H(+). The catalysed reaction is pregnenolone + 3'-phosphoadenylyl sulfate = pregnenolone sulfate + adenosine 3',5'-bisphosphate + H(+). It catalyses the reaction 3beta-hydroxyandrost-5-en-17-one + 3'-phosphoadenylyl sulfate = dehydroepiandrosterone 3-sulfate + adenosine 3',5'-bisphosphate + H(+). The enzyme catalyses lithocholate + 3'-phosphoadenylyl sulfate = lithocholate sulfate + adenosine 3',5'-bisphosphate + H(+). It carries out the reaction (24S)-hydroxycholesterol + 3'-phosphoadenylyl sulfate = (24S)-hydroxycholesterol 24-sulfate + adenosine 3',5'-bisphosphate + H(+). The catalysed reaction is (24S)-hydroxycholesterol + 3'-phosphoadenylyl sulfate = (24S)-hydroxycholesterol 3-sulfate + adenosine 3',5'-bisphosphate + H(+). It catalyses the reaction (24S)-hydroxycholesterol 24-sulfate + 3'-phosphoadenylyl sulfate = (24S)-hydroxycholesterol 3,24-disulfate + adenosine 3',5'-bisphosphate + H(+). The enzyme catalyses androsterone + 3'-phosphoadenylyl sulfate = androsterone 3alpha-sulfate + adenosine 3',5'-bisphosphate + H(+). Sulfotransferase that utilizes 3'-phospho-5'-adenylyl sulfate (PAPS) as sulfonate donor to catalyze the sulfonation of steroids and bile acids in the liver and adrenal glands. Mediates the sulfation of a wide range of steroids and sterols, including pregnenolone, androsterone, DHEA, bile acids, cholesterol and as well many xenobiotics that contain alcohol and phenol functional groups. Sulfonation increases the water solubility of most compounds, and therefore their renal excretion, but it can also result in bioactivation to form active metabolites. Plays an important role in maintening steroid and lipid homeostasis. Plays a key role in bile acid metabolism. In addition, catalyzes the metabolic activation of potent carcinogenic polycyclic arylmethanols. This is Sulfotransferase 2A1 (Sult2a1) from Mus musculus (Mouse).